A 213-amino-acid chain; its full sequence is MRMRHKPWADDFLAENADIAISNPADYKGKWNTVFGNDNPIHIEVGTGKGQFISGMAKQNPDINYIGIELFKSVIVTAVQKVKDSEAQNVKLLNIDADTLTDVFEPGEVKRVYLNFSDPWPKKRHEKRRLTYSHFLKKYEEVMGKGGSIHFKTDNRGLFEYSLKSFSEYGLLLTYVSLDLHNSNLEGNIMTEYEEKFSALGQPIYRAEVEWRT.

Residues E44, E69, D96, and D118 each contribute to the S-adenosyl-L-methionine site. D118 is a catalytic residue. Residue K122 coordinates substrate. The interval 124-129 (RHEKRR) is interaction with RNA. Substrate contacts are provided by residues D154 and 191 to 194 (TEYE).

It belongs to the class I-like SAM-binding methyltransferase superfamily. TrmB family. In terms of assembly, homodimer.

The catalysed reaction is guanosine(46) in tRNA + S-adenosyl-L-methionine = N(7)-methylguanosine(46) in tRNA + S-adenosyl-L-homocysteine. The protein operates within tRNA modification; N(7)-methylguanine-tRNA biosynthesis. Catalyzes the formation of N(7)-methylguanine at position 46 (m7G46) in tRNA. The protein is tRNA (guanine-N(7)-)-methyltransferase of Bacillus subtilis (strain 168).